The following is a 184-amino-acid chain: Large ribosomal subunit protein uL5 (184 aa).

The protein belongs to the universal ribosomal protein uL5 family. As to quaternary structure, part of the 50S ribosomal subunit; part of the 5S rRNA/L5/L18/L25 subcomplex. Contacts the 5S rRNA and the P site tRNA. Forms a bridge to the 30S subunit in the 70S ribosome.

Functionally, this is one of the proteins that bind and probably mediate the attachment of the 5S RNA into the large ribosomal subunit, where it forms part of the central protuberance. In the 70S ribosome it contacts protein S13 of the 30S subunit (bridge B1b), connecting the 2 subunits; this bridge is implicated in subunit movement. Contacts the P site tRNA; the 5S rRNA and some of its associated proteins might help stabilize positioning of ribosome-bound tRNAs. The protein is Large ribosomal subunit protein uL5 of Ureaplasma parvum serovar 3 (strain ATCC 27815 / 27 / NCTC 11736).